Here is a 507-residue protein sequence, read N- to C-terminus: Ribonuclease Y (507 aa).

The helical transmembrane segment at 1–21 threads the bilayer; it reads MLWYIVAGAGGLLIGYLIANY. Residues 197-282 form the KH domain; that stretch reads TVSTVSLPSD…EMYEKAKQEV (86 aa). Positions 323–416 constitute an HD domain; that stretch reads VLNHSIEVAL…VAAADALSAA (94 aa).

This sequence belongs to the RNase Y family.

It localises to the cell membrane. Endoribonuclease that initiates mRNA decay. This Thermotoga sp. (strain RQ2) protein is Ribonuclease Y.